Here is a 123-residue protein sequence, read N- to C-terminus: Small ribosomal subunit protein uS13 (123 aa).

Positions 93 to 123 (RRNLPVRGQKTKTNARTRKGPKRAIGGKKKK) are disordered.

The protein belongs to the universal ribosomal protein uS13 family. Part of the 30S ribosomal subunit. Forms a loose heterodimer with protein S19. Forms two bridges to the 50S subunit in the 70S ribosome.

Functionally, located at the top of the head of the 30S subunit, it contacts several helices of the 16S rRNA. In the 70S ribosome it contacts the 23S rRNA (bridge B1a) and protein L5 of the 50S subunit (bridge B1b), connecting the 2 subunits; these bridges are implicated in subunit movement. Contacts the tRNAs in the A and P-sites. The polypeptide is Small ribosomal subunit protein uS13 (Clostridium botulinum (strain Kyoto / Type A2)).